The primary structure comprises 631 residues: tRNA uridine 5-carboxymethylaminomethyl modification enzyme MnmG (631 aa).

Residues 15–20, Ile127, and Ser182 each bind FAD; that span reads GAGHAG. Position 276–290 (276–290) interacts with NAD(+); sequence GPRYCPSIEDKIVRF. Gln373 is a binding site for FAD.

Belongs to the MnmG family. As to quaternary structure, homodimer. Heterotetramer of two MnmE and two MnmG subunits. Requires FAD as cofactor.

It localises to the cytoplasm. In terms of biological role, NAD-binding protein involved in the addition of a carboxymethylaminomethyl (cmnm) group at the wobble position (U34) of certain tRNAs, forming tRNA-cmnm(5)s(2)U34. The polypeptide is tRNA uridine 5-carboxymethylaminomethyl modification enzyme MnmG (Streptococcus mutans serotype c (strain ATCC 700610 / UA159)).